We begin with the raw amino-acid sequence, 125 residues long: Fluoride-specific ion channel FluC (125 aa).

Helical transmembrane passes span 6-26 (AWIA…SGLV), 36-56 (WGTW…WALA), 68-88 (FIVL…AFEA), and 97-117 (WLLA…CVFL). Na(+)-binding residues include glycine 76 and threonine 79.

The protein belongs to the fluoride channel Fluc/FEX (TC 1.A.43) family.

Its subcellular location is the cell inner membrane. It carries out the reaction fluoride(in) = fluoride(out). With respect to regulation, na(+) is not transported, but it plays an essential structural role and its presence is essential for fluoride channel function. In terms of biological role, fluoride-specific ion channel. Important for reducing fluoride concentration in the cell, thus reducing its toxicity. This is Fluoride-specific ion channel FluC from Nitrosococcus oceani (strain ATCC 19707 / BCRC 17464 / JCM 30415 / NCIMB 11848 / C-107).